The primary structure comprises 290 residues: 33 kDa chaperonin (290 aa).

Disulfide bonds link Cys235–Cys237 and Cys268–Cys271.

The protein belongs to the HSP33 family. Post-translationally, under oxidizing conditions two disulfide bonds are formed involving the reactive cysteines. Under reducing conditions zinc is bound to the reactive cysteines and the protein is inactive.

Its subcellular location is the cytoplasm. Its function is as follows. Redox regulated molecular chaperone. Protects both thermally unfolding and oxidatively damaged proteins from irreversible aggregation. Plays an important role in the bacterial defense system toward oxidative stress. This is 33 kDa chaperonin from Streptococcus pyogenes serotype M1.